An 800-amino-acid polypeptide reads, in one-letter code: Aldehyde dehydrogenase family 16 member A1 (800 aa).

Belongs to the aldehyde dehydrogenase family. Interacts with SPG21.

The chain is Aldehyde dehydrogenase family 16 member A1 (ALDH16A1) from Bos taurus (Bovine).